We begin with the raw amino-acid sequence, 259 residues long: Sesquipedalian-2 (259 aa).

The region spanning P17–F121 is the PH domain. A coiled-coil region spans residues M124–Q150. The tract at residues S155–D178 is disordered. The segment covering A161 to D178 has biased composition (basic and acidic residues). Residues C223–I235 carry the F&amp;H motif.

This sequence belongs to the sesquipedalian family. In terms of assembly, forms homodimers and heterodimers with PHETA1. Interacts with OCRL and INPP5B.

Its subcellular location is the early endosome. It is found in the recycling endosome. The protein resides in the golgi apparatus. It localises to the trans-Golgi network. The protein localises to the cytoplasmic vesicle. Its subcellular location is the clathrin-coated vesicle. In terms of biological role, plays a role in endocytic trafficking. Required for receptor recycling from endosomes, both to the trans-Golgi network and the plasma membrane. This Mus musculus (Mouse) protein is Sesquipedalian-2.